We begin with the raw amino-acid sequence, 281 residues long: NADPH-dependent 7-cyano-7-deazaguanine reductase (281 aa).

A substrate-binding site is contributed by 87 to 89; that stretch reads IES. 89–90 provides a ligand contact to NADPH; sequence SK. Cys188 serves as the catalytic Thioimide intermediate. Catalysis depends on Asp195, which acts as the Proton donor. A substrate-binding site is contributed by 227 to 228; the sequence is HE. 256–257 lines the NADPH pocket; the sequence is RG.

Belongs to the GTP cyclohydrolase I family. QueF type 2 subfamily. As to quaternary structure, homodimer.

Its subcellular location is the cytoplasm. The catalysed reaction is 7-aminomethyl-7-carbaguanine + 2 NADP(+) = 7-cyano-7-deazaguanine + 2 NADPH + 3 H(+). It participates in tRNA modification; tRNA-queuosine biosynthesis. Functionally, catalyzes the NADPH-dependent reduction of 7-cyano-7-deazaguanine (preQ0) to 7-aminomethyl-7-deazaguanine (preQ1). The sequence is that of NADPH-dependent 7-cyano-7-deazaguanine reductase from Photobacterium profundum (strain SS9).